The chain runs to 515 residues: 2-isopropylmalate synthase (515 aa).

Positions 5–267 (VIIFDTTLRD…DTHINTQEIH (263 aa)) constitute a Pyruvate carboxyltransferase domain. Mn(2+)-binding residues include D14, H202, H204, and N238. The tract at residues 392 to 515 (VLDKLSAHST…VADIKNHKHH (124 aa)) is regulatory domain.

Belongs to the alpha-IPM synthase/homocitrate synthase family. LeuA type 1 subfamily. In terms of assembly, homodimer. Requires Mn(2+) as cofactor.

It localises to the cytoplasm. The enzyme catalyses 3-methyl-2-oxobutanoate + acetyl-CoA + H2O = (2S)-2-isopropylmalate + CoA + H(+). The protein operates within amino-acid biosynthesis; L-leucine biosynthesis; L-leucine from 3-methyl-2-oxobutanoate: step 1/4. Its function is as follows. Catalyzes the condensation of the acetyl group of acetyl-CoA with 3-methyl-2-oxobutanoate (2-ketoisovalerate) to form 3-carboxy-3-hydroxy-4-methylpentanoate (2-isopropylmalate). The chain is 2-isopropylmalate synthase from Haemophilus influenzae (strain ATCC 51907 / DSM 11121 / KW20 / Rd).